The sequence spans 767 residues: Photosystem I P700 chlorophyll a apoprotein A1 (767 aa).

Helical transmembrane passes span 72 to 95 (IFSA…FHGA), 158 to 181 (LMAL…FHYH), 197 to 221 (LNHH…HVSA), 305 to 323 (IAHH…GHMY), 364 to 387 (WHAQ…QHMY), 403 to 429 (IGLF…IAMV), 451 to 473 (AIIS…LYIH), and 548 to 566 (FMVH…LILL). Residues C590 and C599 each coordinate [4Fe-4S] cluster. A run of 2 helical transmembrane segments spans residues 606-627 (HVFL…HFSW) and 681-703 (TSAY…MFLF). H692 lines the chlorophyll a' pocket. Residues M700 and Y708 each coordinate chlorophyll a. W709 lines the phylloquinone pocket. The helical transmembrane segment at 741–761 (AVGVAHYLLGGIATTWAFFHA) threads the bilayer.

This sequence belongs to the PsaA/PsaB family. The PsaA/B heterodimer binds the P700 chlorophyll special pair and subsequent electron acceptors. PSI consists of a core antenna complex that captures photons, and an electron transfer chain that converts photonic excitation into a charge separation. The cyanobacterial PSI reaction center is composed of one copy each of PsaA,B,C,D,E,F,I,J,K,L,M and X, and forms trimeric complexes. PSI electron transfer chain: 5 chlorophyll a, 1 chlorophyll a', 2 phylloquinones and 3 4Fe-4S clusters. PSI core antenna: 90 chlorophyll a, 22 carotenoids, 3 phospholipids and 1 galactolipid. P700 is a chlorophyll a/chlorophyll a' dimer, A0 is one or more chlorophyll a, A1 is one or both phylloquinones and FX is a shared 4Fe-4S iron-sulfur center. is required as a cofactor.

It localises to the cellular thylakoid membrane. It carries out the reaction reduced [plastocyanin] + hnu + oxidized [2Fe-2S]-[ferredoxin] = oxidized [plastocyanin] + reduced [2Fe-2S]-[ferredoxin]. PsaA and PsaB bind P700, the primary electron donor of photosystem I (PSI), as well as the electron acceptors A0, A1 and FX. PSI is a plastocyanin/cytochrome c6-ferredoxin oxidoreductase, converting photonic excitation into a charge separation, which transfers an electron from the donor P700 chlorophyll pair to the spectroscopically characterized acceptors A0, A1, FX, FA and FB in turn. Oxidized P700 is reduced on the lumenal side of the thylakoid membrane by plastocyanin or cytochrome c6. The polypeptide is Photosystem I P700 chlorophyll a apoprotein A1 (Parasynechococcus marenigrum (strain WH8102)).